A 368-amino-acid polypeptide reads, in one-letter code: Spermidine/putrescine import ATP-binding protein PotA (368 aa).

The ABC transporter domain maps to 8–238 (IELRGVTKNF…PANLYVARFV (231 aa)). 40–47 (GPSGCGKT) contributes to the ATP binding site.

Belongs to the ABC transporter superfamily. Spermidine/putrescine importer (TC 3.A.1.11.1) family. As to quaternary structure, the complex is composed of two ATP-binding proteins (PotA), two transmembrane proteins (PotB and PotC) and a solute-binding protein (PotD).

Its subcellular location is the cell inner membrane. It carries out the reaction ATP + H2O + polyamine-[polyamine-binding protein]Side 1 = ADP + phosphate + polyamineSide 2 + [polyamine-binding protein]Side 1.. Its function is as follows. Part of the ABC transporter complex PotABCD involved in spermidine/putrescine import. Responsible for energy coupling to the transport system. The polypeptide is Spermidine/putrescine import ATP-binding protein PotA (Nitratidesulfovibrio vulgaris (strain ATCC 29579 / DSM 644 / CCUG 34227 / NCIMB 8303 / VKM B-1760 / Hildenborough) (Desulfovibrio vulgaris)).